A 293-amino-acid polypeptide reads, in one-letter code: Oxidoreductase clz16 (293 aa).

It belongs to the asaB hydroxylase/desaturase family.

Its pathway is secondary metabolite biosynthesis. Oxidoreductase; part of the gene cluster that mediates the biosynthesis of squalestatin S1 (SQS1, also known as zaragozic acid A), a heavily oxidized fungal polyketide that offers potent cholesterol lowering activity by targeting squalene synthase (SS). SQS1 is composed of a 2,8-dioxobicyclic[3.2.1]octane-3,4,5-tricarboxyclic acid core that is connected to two lipophilic polyketide arms. These initial steps feature the priming of an unusual benzoic acid starter unit onto the highly reducing polyketide synthase clz14, followed by oxaloacetate extension and product release to generate a tricarboxylic acid containing product. The phenylalanine ammonia lyase (PAL) clz10 and the acyl-CoA ligase clz12 are involved in transforming phenylalanine into benzoyl-CoA. The citrate synthase-like protein clz17 is involved in connecting the C-alpha-carbons of the hexaketide chain and oxaloacetate to afford the tricarboxylic acid unit. The potential hydrolytic enzymes, clz11 and clz13, are in close proximity to pks2 and may participate in product release. On the other side, the tetraketide arm is synthesized by a the squalestatin tetraketide synthase clz2 and enzymatically esterified to the core in the last biosynthetic step, by the acetyltransferase clz6. The biosynthesis of the tetraketide must involve 3 rounds of chain extension. After the first and second rounds methyl-transfer occurs, and in all rounds of extension the ketoreductase and dehydratase are active. The enoyl reductase and C-MeT of clz2 are not active in the final round of extension. The acetyltransferase clz6 appears to have a broad substrate selectivity for its acyl CoA substrate, allowing the in vitro synthesis of novel squalestatins. The biosynthesis of SQS1 requires several oxidative steps likely performed by oxidoreductases clz3, clz15 and clz16. Finally, in support of the identification of the cluster as being responsible for SQS1 production, the cluster contains a gene encoding a putative squalene synthase (SS) clz20, suggesting a likely mechanism for self-resistance. The chain is Oxidoreductase clz16 from Cochliobolus lunatus (Filamentous fungus).